The primary structure comprises 607 residues: tRNA uridine 5-carboxymethylaminomethyl modification enzyme MnmG (607 aa).

FAD-binding positions include 11 to 16, V123, and S178; that span reads GGGHAG. NAD(+) is bound at residue 270–284; that stretch reads GPRYCPSVEDKIVRF. An FAD-binding site is contributed by Q367.

It belongs to the MnmG family. Homodimer. Heterotetramer of two MnmE and two MnmG subunits. Requires FAD as cofactor.

It localises to the cytoplasm. Its function is as follows. NAD-binding protein involved in the addition of a carboxymethylaminomethyl (cmnm) group at the wobble position (U34) of certain tRNAs, forming tRNA-cmnm(5)s(2)U34. The sequence is that of tRNA uridine 5-carboxymethylaminomethyl modification enzyme MnmG from Metamycoplasma arthritidis (strain 158L3-1) (Mycoplasma arthritidis).